We begin with the raw amino-acid sequence, 299 residues long: N-acetylaspartate synthetase (299 aa).

Residues 44–57 (AAPGPAAAPPPAAG) show a composition bias toward pro residues. Residues 44 to 70 (AAPGPAAAPPPAAGPQPHGGTGGAGPP) are disordered. Residues 60–70 (PHGGTGGAGPP) show a composition bias toward gly residues. Residues 118-138 (YALLAALCFAVTRSLLLTCLV) form a helical membrane-spanning segment. In terms of domain architecture, N-acetyltransferase spans 143–280 (LALRYYYSRK…VLPGMTLSLA (138 aa)).

Belongs to the NAT8 family. Expressed in brain, including in mesencephalic dopaminergic neurons of the substantia nigra and ventral tegmental area and oligodendrocytes. Expressed in cortical pyramidal neurons and granule cells of the hippocampus (at protein level).

The protein resides in the cytoplasm. Its subcellular location is the microsome membrane. It is found in the mitochondrion membrane. It localises to the endoplasmic reticulum membrane. The enzyme catalyses L-aspartate + acetyl-CoA = N-acetyl-L-aspartate + CoA + H(+). Aminooxyacetic acid (AOAA) blocks its activity in both cytoplasm and mitochondria. Catalyzes the synthesis of N-acetylaspartate acid (NAA) from L-aspartate and acetyl-CoA. Promotes dopamine uptake by regulating TNF-alpha expression. Attenuates methamphetamine-induced inhibition of dopamine uptake. This Rattus norvegicus (Rat) protein is N-acetylaspartate synthetase (Nat8l).